We begin with the raw amino-acid sequence, 1040 residues long: Myoblast growth factor receptor egl-15 (1040 aa).

A signal peptide spans 1–19 (MSYFLASCLGVGLLSTVSC). The Extracellular segment spans residues 20–525 (SLQGLTSHYR…PKIDRWTTSD (506 aa)). The region spanning 33–125 (PRFKHVANER…GQISRNFTVE (93 aa)) is the Ig-like C2-type 1 domain. An intrachain disulfide couples Cys55 to Cys109. Asn121 is a glycosylation site (N-linked (GlcNAc...) asparagine). The segment covering 234–257 (VHDSEESPSESRTEFINADEKENK) has biased composition (basic and acidic residues). A disordered region spans residues 234–267 (VHDSEESPSESRTEFINADEKENKEDEEEDYSVS). N-linked (GlcNAc...) asparagine glycosylation is found at Asn280 and Asn299. Ig-like C2-type domains are found at residues 287 to 383 (PYFK…FHVI) and 391 to 501 (PPII…ATLT). An intrachain disulfide couples Cys314 to Cys367. 7 N-linked (GlcNAc...) asparagine glycosylation sites follow: Asn401, Asn407, Asn433, Asn440, Asn449, Asn474, and Asn497. A disulfide bond links Cys414 and Cys485. A helical membrane pass occupies residues 526–549 (YIFTTILLFLLLAATLFGILFMVC). At 550-1040 (KQTLHKKGFM…NNNSMSKPEF (491 aa)) the chain is on the cytoplasmic side. Residues 640-931 (LSLVHMLGEG…KTIVDYLDWM (292 aa)) form the Protein kinase domain. ATP is bound by residues 646–654 (LGEGAFGEV) and Lys672. Asp797 acts as the Proton acceptor in catalysis. Tyr828 carries the post-translational modification Phosphotyrosine; by autocatalysis. Disordered stretches follow at residues 952–984 (ERST…LPSE) and 1021–1040 (TPET…KPEF). Residues 1022-1040 (PETSQRIPSNNNSMSKPEF) are compositionally biased toward polar residues.

It belongs to the protein kinase superfamily. Tyr protein kinase family. Fibroblast growth factor receptor subfamily. Mg(2+) serves as cofactor. In terms of processing, activity is regulated by the phosphatase clr-1, however it is not known whether clr-1 acts directly on egl-15.

Its subcellular location is the membrane. The enzyme catalyses L-tyrosyl-[protein] + ATP = O-phospho-L-tyrosyl-[protein] + ADP + H(+). Its function is as follows. Receptor tyrosine kinase required for larval development. May phosphorylate adapter protein soc-1 which in turn may result in the recruitment and/or activation of phosphatase ptp-2. May activate the Ras/MAPK kinase signaling pathway which includes sem-5, sos-1, let-60/Ras, lin-45/Raf, mek-2 and mpk-1. Acts in the hypodermis to regulate axon growth and fluid homeostasis. Activates protein degradation in muscles. Probably following interaction with ligand let-756, negatively regulates membrane protrusion from body wall muscles during larval development. Plays a role in nicotinic acetylcholine receptor (nAChR)-mediated sensitivity to nicotine. Regulates synaptic levels of nAChR subunit lev-1 in the nerve cord. In terms of biological role, affects the maintenance of axon position without affecting axon growth. Interaction with egl-17 is required for the guidance of sex myoblast migration during gonad development. Interaction with let-756 appears to play a role in maintaining body morphology at higher temperatures. The sequence is that of Myoblast growth factor receptor egl-15 (egl-15) from Caenorhabditis elegans.